The chain runs to 165 residues: Endoribonuclease YbeY (165 aa).

His130, His134, and His140 together coordinate Zn(2+).

It belongs to the endoribonuclease YbeY family. The cofactor is Zn(2+).

It is found in the cytoplasm. Single strand-specific metallo-endoribonuclease involved in late-stage 70S ribosome quality control and in maturation of the 3' terminus of the 16S rRNA. In Streptococcus suis (strain 98HAH33), this protein is Endoribonuclease YbeY.